Reading from the N-terminus, the 131-residue chain is Profilin-1 (131 aa).

It belongs to the profilin family. As to quaternary structure, occurs in many kinds of cells as a complex with monomeric actin in a 1:1 ratio.

The protein localises to the cytoplasm. It is found in the cytoskeleton. In terms of biological role, binds to actin and affects the structure of the cytoskeleton. At high concentrations, profilin prevents the polymerization of actin, whereas it enhances it at low concentrations. By binding to PIP2, it inhibits the formation of IP3 and DG. The chain is Profilin-1 (PRO1) from Hordeum vulgare (Barley).